The following is a 255-amino-acid chain: Ribonuclease HII (255 aa).

The RNase H type-2 domain occupies 72 to 255 (AIICGIDEVG…KSFEPIKSLL (184 aa)). Asp78, Glu79, and Asp170 together coordinate a divalent metal cation.

It belongs to the RNase HII family. Mn(2+) is required as a cofactor. The cofactor is Mg(2+).

The protein resides in the cytoplasm. It carries out the reaction Endonucleolytic cleavage to 5'-phosphomonoester.. In terms of biological role, endonuclease that specifically degrades the RNA of RNA-DNA hybrids. This Staphylococcus aureus (strain MRSA252) protein is Ribonuclease HII.